Here is a 402-residue protein sequence, read N- to C-terminus: MKNLATVEDTLTSWPQVLLNTYGTPPVELVTGKGSTVTDADGNVYIDLLAGIAVNALGHAHPAIIEAVTTQLSQLGHVSNLFATRPVVEVAAELVQRFALDDATIASQTQVFFCNSGAEANEAAFKLARLTGRHRILAATNGFHGRTMGSLALTGQPDKRIPFAPLPSGVEFYPYGDLDYLTTLVESDPTDTAAIILEPIQGETGVIPAPEGFLTGVRELCDKHGLLFIVDEVQTGIGRTGDFFAHQHEGVTPDVVTMAKGLGGGLPIGACLATGEAAKLFGPGKHGTTFGGNPVSAAAARAVLSVIDEEFCADVARKGELFAEQLRGVAGVADVRGRGLMLGVVLDQPVAKQAVTAGFKHGLILNAPADNIIRLTPPLVITDDEIRDAVRALAAVLAELNA.

Residues G117–A118 and F143 each bind pyridoxal 5'-phosphate. Position 146 (R146) interacts with N(2)-acetyl-L-ornithine. Residue D231 to Q234 participates in pyridoxal 5'-phosphate binding. K260 is subject to N6-(pyridoxal phosphate)lysine. T288 is a N(2)-acetyl-L-ornithine binding site. Residue T289 coordinates pyridoxal 5'-phosphate.

The protein belongs to the class-III pyridoxal-phosphate-dependent aminotransferase family. ArgD subfamily. Homodimer. Requires pyridoxal 5'-phosphate as cofactor.

It is found in the cytoplasm. It catalyses the reaction N(2)-acetyl-L-ornithine + 2-oxoglutarate = N-acetyl-L-glutamate 5-semialdehyde + L-glutamate. It participates in amino-acid biosynthesis; L-arginine biosynthesis; N(2)-acetyl-L-ornithine from L-glutamate: step 4/4. This is Acetylornithine aminotransferase from Corynebacterium efficiens (strain DSM 44549 / YS-314 / AJ 12310 / JCM 11189 / NBRC 100395).